A 125-amino-acid polypeptide reads, in one-letter code: Photoactive yellow protein (125 aa).

The PAS domain maps to 23–86; it reads IDDLAFGAIQ…GRFREGVANG (64 aa). Cysteine 69 is modified (S-(4-hydroxycinnamyl)cysteine).

It belongs to the photoactive yellow protein family. Post-translationally, the 4-hydroxycinnamic acid (p-coumaric acid) chromophore is covalently bound via a thioester linkage.

Functionally, this photoactive protein is a photoreceptor with kinetics similar to that of rhodopsin. The chain is Photoactive yellow protein (pyp) from Rhodothalassium salexigens (Rhodospirillum salexigens).